The chain runs to 529 residues: Bifunctional purine biosynthesis protein PurH (529 aa).

Residues 1–148 enclose the MGS-like domain; the sequence is MNNARPIRRA…KNHKDTTIIV (148 aa).

The protein belongs to the PurH family.

The enzyme catalyses (6R)-10-formyltetrahydrofolate + 5-amino-1-(5-phospho-beta-D-ribosyl)imidazole-4-carboxamide = 5-formamido-1-(5-phospho-D-ribosyl)imidazole-4-carboxamide + (6S)-5,6,7,8-tetrahydrofolate. It catalyses the reaction IMP + H2O = 5-formamido-1-(5-phospho-D-ribosyl)imidazole-4-carboxamide. It functions in the pathway purine metabolism; IMP biosynthesis via de novo pathway; 5-formamido-1-(5-phospho-D-ribosyl)imidazole-4-carboxamide from 5-amino-1-(5-phospho-D-ribosyl)imidazole-4-carboxamide (10-formyl THF route): step 1/1. Its pathway is purine metabolism; IMP biosynthesis via de novo pathway; IMP from 5-formamido-1-(5-phospho-D-ribosyl)imidazole-4-carboxamide: step 1/1. The polypeptide is Bifunctional purine biosynthesis protein PurH (Shewanella pealeana (strain ATCC 700345 / ANG-SQ1)).